The primary structure comprises 188 residues: Elongation factor P (188 aa).

Position 34 is an N6-(3,6-diaminohexanoyl)-5-hydroxylysine (lysine 34).

The protein belongs to the elongation factor P family. May be beta-lysylated on the epsilon-amino group of Lys-34 by the combined action of EpmA and EpmB, and then hydroxylated on the C5 position of the same residue by EpmC (if this protein is present). Lysylation is critical for the stimulatory effect of EF-P on peptide-bond formation. The lysylation moiety may extend toward the peptidyltransferase center and stabilize the terminal 3-CCA end of the tRNA. Hydroxylation of the C5 position on Lys-34 may allow additional potential stabilizing hydrogen-bond interactions with the P-tRNA.

Its subcellular location is the cytoplasm. It functions in the pathway protein biosynthesis; polypeptide chain elongation. Its function is as follows. Involved in peptide bond synthesis. Alleviates ribosome stalling that occurs when 3 or more consecutive Pro residues or the sequence PPG is present in a protein, possibly by augmenting the peptidyl transferase activity of the ribosome. Modification of Lys-34 is required for alleviation. The chain is Elongation factor P from Glaesserella parasuis serovar 5 (strain SH0165) (Haemophilus parasuis).